The following is a 363-amino-acid chain: Aminomethyltransferase (363 aa).

It belongs to the GcvT family. The glycine cleavage system is composed of four proteins: P, T, L and H.

It catalyses the reaction N(6)-[(R)-S(8)-aminomethyldihydrolipoyl]-L-lysyl-[protein] + (6S)-5,6,7,8-tetrahydrofolate = N(6)-[(R)-dihydrolipoyl]-L-lysyl-[protein] + (6R)-5,10-methylene-5,6,7,8-tetrahydrofolate + NH4(+). Its function is as follows. The glycine cleavage system catalyzes the degradation of glycine. This is Aminomethyltransferase from Staphylococcus aureus (strain N315).